A 256-amino-acid chain; its full sequence is Cytokine-inducible SH2-containing protein (256 aa).

Positions 81–162 (WYWGSITASE…PDVVSLVQHY (82 aa)) constitute an SH2 domain. Residues 168–190 (ADTRSDSPDPAPTPALPVSKPDA) are disordered. The 49-residue stretch at 207–255 (KLVQPFVRRSSARSLQHLCRLVINRLVTDVDCLPLPRRMADYLRQYPFQ) folds into the SOCS box domain.

As to quaternary structure, stably associated with the tyrosine-phosphorylated IL3 receptor beta chain and tyrosine-phosphorylated EPO receptor (EPOR).

Its pathway is protein modification; protein ubiquitination. SOCS family proteins form part of a classical negative feedback system that regulates cytokine signal transduction. CIS is involved in the negative regulation of cytokines that signal through the JAK-STAT5 pathway such as erythropoietin, prolactin and interleukin 3 (IL3) receptor. Inhibits STAT5 trans-activation by suppressing its tyrosine phosphorylation. May be a substrate recognition component of a SCF-like ECS (Elongin BC-CUL2/5-SOCS-box protein) E3 ubiquitin-protein ligase complex which mediates the ubiquitination and subsequent proteasomal degradation of target proteins. The protein is Cytokine-inducible SH2-containing protein (Cish) of Rattus norvegicus (Rat).